Consider the following 133-residue polypeptide: Large ribosomal subunit protein eL19 (133 aa).

Residues 55 to 83 (RGISGARKKPRRKGPGSRKGGKYSKLPRK) are disordered. Basic residues predominate over residues 60–83 (ARKKPRRKGPGSRKGGKYSKLPRK).

It belongs to the eukaryotic ribosomal protein eL19 family. In terms of assembly, part of the 50S ribosomal subunit.

Functionally, binds to the 23S rRNA. The protein is Large ribosomal subunit protein eL19 of Korarchaeum cryptofilum (strain OPF8).